The following is a 270-amino-acid chain: 4-hydroxy-tetrahydrodipicolinate reductase (270 aa).

NAD(+) contacts are provided by residues 8–13 (GALGRM), aspartate 34, 102–104 (GTT), and 128–131 (SQNY). Catalysis depends on histidine 160, which acts as the Proton donor/acceptor. Residue histidine 161 participates in (S)-2,3,4,5-tetrahydrodipicolinate binding. Residue lysine 164 is the Proton donor of the active site. Residue 170 to 171 (GT) coordinates (S)-2,3,4,5-tetrahydrodipicolinate.

The protein belongs to the DapB family.

The protein localises to the cytoplasm. It carries out the reaction (S)-2,3,4,5-tetrahydrodipicolinate + NAD(+) + H2O = (2S,4S)-4-hydroxy-2,3,4,5-tetrahydrodipicolinate + NADH + H(+). It catalyses the reaction (S)-2,3,4,5-tetrahydrodipicolinate + NADP(+) + H2O = (2S,4S)-4-hydroxy-2,3,4,5-tetrahydrodipicolinate + NADPH + H(+). The protein operates within amino-acid biosynthesis; L-lysine biosynthesis via DAP pathway; (S)-tetrahydrodipicolinate from L-aspartate: step 4/4. Its function is as follows. Catalyzes the conversion of 4-hydroxy-tetrahydrodipicolinate (HTPA) to tetrahydrodipicolinate. The polypeptide is 4-hydroxy-tetrahydrodipicolinate reductase (Methanococcus vannielii (strain ATCC 35089 / DSM 1224 / JCM 13029 / OCM 148 / SB)).